Here is a 590-residue protein sequence, read N- to C-terminus: Putative laccase-19 (590 aa).

The signal sequence occupies residues 1–28; sequence MEKLSMVTSLLCAITVAVLAVAVVSGEA. Plastocyanin-like domains are found at residues 36–152 and 161–315; these read VVHE…PRDG and KDVP…YAGA. Asparagine 41 and asparagine 47 each carry an N-linked (GlcNAc...) asparagine glycan. Cu cation-binding residues include histidine 86 and histidine 88. A glycan (N-linked (GlcNAc...) asparagine) is linked at asparagine 120. Positions 131 and 133 each coordinate Cu cation. Asparagine 205, asparagine 344, asparagine 378, asparagine 397, asparagine 434, and asparagine 465 each carry an N-linked (GlcNAc...) asparagine glycan. One can recognise a Plastocyanin-like 3 domain in the interval 424-566; sequence DFPIRPPRPF…ATAFIVEDGP (143 aa). Positions 483, 486, 488, 545, 546, 547, 551, and 556 each coordinate Cu cation. A disordered region spans residues 565–590; sequence GPTPETSLPPPPPEFKRCGNNGLSQP.

This sequence belongs to the multicopper oxidase family. The cofactor is Cu cation.

Its subcellular location is the secreted. The protein resides in the extracellular space. It localises to the apoplast. The catalysed reaction is 4 hydroquinone + O2 = 4 benzosemiquinone + 2 H2O. In terms of biological role, lignin degradation and detoxification of lignin-derived products. This is Putative laccase-19 (LAC19) from Oryza sativa subsp. indica (Rice).